Consider the following 439-residue polypeptide: Trigger factor (439 aa).

The region spanning 170–255 is the PPIase FKBP-type domain; that stretch reads GDTVVIDFDG…IHELKKLETP (86 aa).

Belongs to the FKBP-type PPIase family. Tig subfamily.

It is found in the cytoplasm. It catalyses the reaction [protein]-peptidylproline (omega=180) = [protein]-peptidylproline (omega=0). Functionally, involved in protein export. Acts as a chaperone by maintaining the newly synthesized protein in an open conformation. Functions as a peptidyl-prolyl cis-trans isomerase. In Oenococcus oeni (strain ATCC BAA-331 / PSU-1), this protein is Trigger factor.